We begin with the raw amino-acid sequence, 271 residues long: Insulin-like growth factor-binding protein 5 (271 aa).

Residues 1–19 (MVLTAVLLLLAACAGPAQG) form the signal peptide. In terms of domain architecture, IGFBP N-terminal spans 22-102 (SFVHCEPCDE…LHGRGVCLNE (81 aa)). 6 disulfide bridges follow: cysteine 26/cysteine 52, cysteine 29/cysteine 54, cysteine 37/cysteine 55, cysteine 44/cysteine 58, cysteine 66/cysteine 79, and cysteine 73/cysteine 99. Over residues 109-121 (AKIERDSREHEEP) the composition is skewed to basic and acidic residues. Residues 109–129 (AKIERDSREHEEPTTSEMAEE) are disordered. Phosphoserine is present on serine 115. The 75-residue stretch at 188 to 262 (QGPCRRHMEA…MEYVDGDFQC (75 aa)) folds into the Thyroglobulin type-1 domain. Intrachain disulfides connect cysteine 191-cysteine 218, cysteine 229-cysteine 240, and cysteine 242-cysteine 262.

In terms of assembly, interacts with IGF1; this interaction enhances the growth stimulatory effects of IGF1 on fibroblasts. Interacts with CAV1; this interaction allows trafficking of IGFBP5 from the plasma membrane to the nucleus. Interacts with NCL; this interaction is necessary for IGFBP5 localization to the nucleus.

The protein localises to the secreted. It localises to the cytoplasm. The protein resides in the nucleus. Functionally, multifunctional protein that plays a critical role in regulating the availability of IGFs to their receptors and thereby regulates IGF-mediated cellular processes including proliferation, differentiation, and apoptosis in a cell-type specific manner. Increases the cell proliferation of osteoblasts, intestinal smooth muscle cells and neuroblastoma cells. Enhances adhesion and survival of epithelial cells but decreases adhesion of mesenchymal cells. Once secreted, acts as a major mediator of mTORC1-dependent feedback inhibition of IGF1 signaling. Also plays a role in the induction of extracellular matrix (ECM) production and deposition independently of its nuclear translocation and binding to IGFs. Acts itself as a growth factor that can act independently of IGFs to regulate bone formation. Acts as a ligand for the ROR1 receptor which triggers formation of ROR1/HER2 heterodimer to enhance CREB oncogenic signaling. The sequence is that of Insulin-like growth factor-binding protein 5 (IGFBP5) from Sus scrofa (Pig).